The primary structure comprises 117 residues: Large ribosomal subunit protein bL20 (117 aa).

Belongs to the bacterial ribosomal protein bL20 family.

Binds directly to 23S ribosomal RNA and is necessary for the in vitro assembly process of the 50S ribosomal subunit. It is not involved in the protein synthesizing functions of that subunit. The polypeptide is Large ribosomal subunit protein bL20 (Mesomycoplasma hyopneumoniae (strain J / ATCC 25934 / NCTC 10110) (Mycoplasma hyopneumoniae)).